Reading from the N-terminus, the 509-residue chain is Aspartyl/glutamyl-tRNA(Asn/Gln) amidotransferase subunit B (509 aa).

Belongs to the GatB/GatE family. GatB subfamily. As to quaternary structure, heterotrimer of A, B and C subunits.

It carries out the reaction L-glutamyl-tRNA(Gln) + L-glutamine + ATP + H2O = L-glutaminyl-tRNA(Gln) + L-glutamate + ADP + phosphate + H(+). The catalysed reaction is L-aspartyl-tRNA(Asn) + L-glutamine + ATP + H2O = L-asparaginyl-tRNA(Asn) + L-glutamate + ADP + phosphate + 2 H(+). Functionally, allows the formation of correctly charged Asn-tRNA(Asn) or Gln-tRNA(Gln) through the transamidation of misacylated Asp-tRNA(Asn) or Glu-tRNA(Gln) in organisms which lack either or both of asparaginyl-tRNA or glutaminyl-tRNA synthetases. The reaction takes place in the presence of glutamine and ATP through an activated phospho-Asp-tRNA(Asn) or phospho-Glu-tRNA(Gln). This chain is Aspartyl/glutamyl-tRNA(Asn/Gln) amidotransferase subunit B, found in Mycobacterium leprae (strain Br4923).